The primary structure comprises 366 residues: uncharacterized protein (366 aa).

The 226-residue stretch at 64–289 (GTVGFIGFPS…LKETMWDYLN (226 aa)) folds into the OBG-type G domain. Residues 70-77 (GFPSVGKS), 116-120 (DLPGI), and 247-250 (NKID) contribute to the GTP site. The region spanning 289–365 (NLVRVYTRPR…LDEDVVTIVK (77 aa)) is the TGS domain.

Belongs to the TRAFAC class OBG-HflX-like GTPase superfamily. OBG GTPase family.

This is an uncharacterized protein from Schizosaccharomyces pombe (strain 972 / ATCC 24843) (Fission yeast).